Consider the following 138-residue polypeptide: Acidic phospholipase A2 CH-E6' (138 aa).

Residues 1–16 (MRTLWIVAVLLLGVEG) form the signal peptide. Disulfide bonds link Cys42–Cys131, Cys44–Cys60, Cys59–Cys111, Cys65–Cys138, Cys66–Cys104, Cys73–Cys97, and Cys91–Cys102. Ca(2+)-binding residues include Tyr43, Gly45, and Gly47. The active site involves His63. Asp64 is a binding site for Ca(2+). Asp105 is an active-site residue.

The protein belongs to the phospholipase A2 family. Group II subfamily. D49 sub-subfamily. Ca(2+) is required as a cofactor. Expressed by the venom gland.

Its subcellular location is the secreted. The catalysed reaction is a 1,2-diacyl-sn-glycero-3-phosphocholine + H2O = a 1-acyl-sn-glycero-3-phosphocholine + a fatty acid + H(+). Snake venom phospholipase A2 (PLA2) that shows high lipolytic and weak ADP-induced platelet aggregation activities. Also shows weak anticoagulant activity. PLA2 catalyzes the calcium-dependent hydrolysis of the 2-acyl groups in 3-sn-phosphoglycerides. The chain is Acidic phospholipase A2 CH-E6' from Crotalus horridus (Timber rattlesnake).